We begin with the raw amino-acid sequence, 275 residues long: 3-oxo-isoapionate decarboxylase (275 aa).

The catalysed reaction is 3-oxoisoapionate + H(+) = L-erythrulose + CO2. The protein operates within carbohydrate metabolism. Involved in catabolism of D-apiose. Catalyzes decarboxylation of 3-oxo-isoapionate to L-erythrulose. The polypeptide is 3-oxo-isoapionate decarboxylase (Pectobacterium atrosepticum (strain SCRI 1043 / ATCC BAA-672) (Erwinia carotovora subsp. atroseptica)).